A 127-amino-acid chain; its full sequence is RutC family protein PYRAB12510 (127 aa).

This sequence belongs to the RutC family.

The chain is RutC family protein PYRAB12510 from Pyrococcus abyssi (strain GE5 / Orsay).